The chain runs to 375 residues: 1-deoxy-D-xylulose 5-phosphate reductoisomerase (375 aa).

Residues Thr-12, Gly-13, Ser-14, Ile-15, Asn-39, and Asn-115 each contribute to the NADPH site. 1-deoxy-D-xylulose 5-phosphate is bound at residue Lys-116. Glu-117 provides a ligand contact to NADPH. Asp-141 is a binding site for Mn(2+). 4 residues coordinate 1-deoxy-D-xylulose 5-phosphate: Ser-142, Glu-143, Ser-163, and His-186. Glu-143 contacts Mn(2+). NADPH is bound at residue Gly-192. Residues Ser-199, Asn-204, Lys-205, and Glu-208 each contribute to the 1-deoxy-D-xylulose 5-phosphate site. Glu-208 contributes to the Mn(2+) binding site.

It belongs to the DXR family. Mg(2+) serves as cofactor. The cofactor is Mn(2+).

The enzyme catalyses 2-C-methyl-D-erythritol 4-phosphate + NADP(+) = 1-deoxy-D-xylulose 5-phosphate + NADPH + H(+). It participates in isoprenoid biosynthesis; isopentenyl diphosphate biosynthesis via DXP pathway; isopentenyl diphosphate from 1-deoxy-D-xylulose 5-phosphate: step 1/6. Its function is as follows. Catalyzes the NADPH-dependent rearrangement and reduction of 1-deoxy-D-xylulose-5-phosphate (DXP) to 2-C-methyl-D-erythritol 4-phosphate (MEP). The polypeptide is 1-deoxy-D-xylulose 5-phosphate reductoisomerase (Thermotoga neapolitana (strain ATCC 49049 / DSM 4359 / NBRC 107923 / NS-E)).